We begin with the raw amino-acid sequence, 1515 residues long: Adhesion G protein-coupled receptor L1 (1515 aa).

Positions M1 to G24 are cleaved as a signal peptide. Over L25–L857 the chain is Extracellular. Residues A40–V129 enclose the SUEL-type lectin domain. Disulfide bonds link C41/C71, C50/C128, C83/C115, C96/C102, and C140/C322. Alpha-L-rhamnose is bound at residue E42. Residue N98 is glycosylated (N-linked (GlcNAc...) asparagine). Residue G117 to K120 coordinates alpha-L-rhamnose. The Olfactomedin-like domain maps to V139–P398. Positions D400–P468 are disordered. Residues P405–T441 are compositionally biased toward low complexity. Residues D453 to P468 show a composition bias toward pro residues. 2 disulfides stabilise this stretch: C480–C515 and C503–C532. Residues N531, N640, N741, N800, N805, and N826 are each glycosylated (N-linked (GlcNAc...) asparagine). The GAIN-B domain maps to P669–Y850. Intrachain disulfides connect C801-C832 and C820-C834. Positions C801 to Y850 are GPS. The chain crosses the membrane as a helical span at residues L858–I878. The Cytoplasmic segment spans residues S879–N892. A helical transmembrane segment spans residues T893–I913. The Extracellular segment spans residues D914–E919. Residues V920–L940 traverse the membrane as a helical segment. At C941–Y964 the chain is on the cytoplasmic side. The helical transmembrane segment at Y965–Y985 threads the bilayer. Residues R986 to Y1001 lie on the Extracellular side of the membrane. The helical transmembrane segment at F1002–M1022 threads the bilayer. The Cytoplasmic segment spans residues V1023–A1049. The chain crosses the membrane as a helical span at residues L1050 to I1070. Residues N1071–S1074 lie on the Extracellular side of the membrane. A helical transmembrane segment spans residues V1075–F1095. The Cytoplasmic segment spans residues H1096–L1515. Residues T1144–T1184 are disordered. R1237 is subject to Omega-N-methylarginine. Position 1263 is a phosphoserine (S1263). Disordered regions lie at residues F1291–N1316, R1337–A1369, E1401–P1470, and Y1492–L1515. 2 stretches are compositionally biased toward pro residues: residues G1345–P1356 and A1449–P1461. 2 positions are modified to phosphoserine: S1497 and S1514.

Belongs to the G-protein coupled receptor 2 family. Adhesion G-protein coupled receptor (ADGR) subfamily. Forms a heterodimer, consisting of a large extracellular region (p120) non-covalently linked to a seven-transmembrane moiety (p85). Interacts with syntaxin and with proteins of the SHANK family via the PDZ domain. Isoform 2 interacts with TENM2. Interacts (via extracellular domain) with FLRT1, FLRT2 and FLRT3 (via extracellular domain). In terms of processing, autoproteolytically cleaved into 2 subunits, an extracellular subunit and a seven-transmembrane subunit. This proteolytic processing takes place early in the biosynthetic pathway, either in the endoplasmic reticulum or in the early compartment of the Golgi apparatus. In terms of tissue distribution, expressed in the brain (at protein level). Brain specific distribution but low levels are also detected in most tissues.

The protein resides in the cell membrane. Its subcellular location is the cell projection. It is found in the axon. It localises to the growth cone. The protein localises to the synapse. The protein resides in the presynaptic cell membrane. Its subcellular location is the synaptosome. Calcium-independent receptor of high affinity for alpha-latrotoxin, an excitatory neurotoxin present in black widow spider venom which triggers massive exocytosis from neurons and neuroendocrine cells. Receptor probably implicated in the regulation of exocytosis. Functionally, receptor for TENM2 that mediates heterophilic synaptic cell-cell contact and postsynaptic specialization. The polypeptide is Adhesion G protein-coupled receptor L1 (Rattus norvegicus (Rat)).